Consider the following 613-residue polypeptide: Kelch-like protein 36 (613 aa).

The BTB domain occupies C45–G112. Residues Y147–K249 form the BACK domain. Kelch repeat units lie at residues C294–G343, F344–D395, M396–D442, V444–D491, S492–G544, and R545–L593.

As to quaternary structure, interacts with CUL3.

Its pathway is protein modification; protein ubiquitination. Probable substrate-specific adapter of an E3 ubiquitin-protein ligase complex which mediates the ubiquitination and subsequent proteasomal degradation of target proteins. The sequence is that of Kelch-like protein 36 (Klhl36) from Rattus norvegicus (Rat).